Consider the following 331-residue polypeptide: Sulfate/thiosulfate import ATP-binding protein CysA (331 aa).

The ABC transporter domain maps to 2-232 (ITVTNARKNY…PANEFVMSFL (231 aa)). 34–41 (GPSGSGKS) is a binding site for ATP.

This sequence belongs to the ABC transporter superfamily. Sulfate/tungstate importer (TC 3.A.1.6) family. In terms of assembly, the complex is composed of two ATP-binding proteins (CysA), two transmembrane proteins (CysT and CysW) and a solute-binding protein (CysP).

It is found in the cell membrane. The enzyme catalyses sulfate(out) + ATP + H2O = sulfate(in) + ADP + phosphate + H(+). It carries out the reaction thiosulfate(out) + ATP + H2O = thiosulfate(in) + ADP + phosphate + H(+). In terms of biological role, part of the ABC transporter complex CysAWTP involved in sulfate/thiosulfate import. Responsible for energy coupling to the transport system. This chain is Sulfate/thiosulfate import ATP-binding protein CysA, found in Nocardia farcinica (strain IFM 10152).